A 178-amino-acid polypeptide reads, in one-letter code: Inorganic pyrophosphatase (178 aa).

Residues lysine 30, arginine 44, and tyrosine 56 each coordinate substrate. Aspartate 66, aspartate 71, and aspartate 103 together coordinate Mg(2+). Tyrosine 142 contacts substrate.

The protein belongs to the PPase family. In terms of assembly, homohexamer. It depends on Mg(2+) as a cofactor.

Its subcellular location is the cytoplasm. It carries out the reaction diphosphate + H2O = 2 phosphate + H(+). Functionally, catalyzes the hydrolysis of inorganic pyrophosphate (PPi) forming two phosphate ions. The protein is Inorganic pyrophosphatase of Xanthomonas campestris pv. campestris (strain ATCC 33913 / DSM 3586 / NCPPB 528 / LMG 568 / P 25).